A 165-amino-acid chain; its full sequence is Neurotrophin-3 (165 aa).

Residues 1 to 3 (IQS) form the signal peptide. Positions 4-119 (TSMDQGSLSE…VLNRTSRRKR (116 aa)) are excised as a propeptide. The tract at residues 32-61 (KVPKQAARTKDGTQTTAKKTEAEPEATANK) is disordered. An N-linked (GlcNAc...) asparagine glycan is attached at Asn112.

This sequence belongs to the NGF-beta family.

The protein resides in the secreted. Its function is as follows. Seems to promote the survival of visceral and proprioceptive sensory neurons. This chain is Neurotrophin-3 (NTF3), found in Xenopeltis unicolor (Sunbeam snake).